The primary structure comprises 958 residues: MTTPLMGVMPTSLRATLQNCSRGNQQEGLFSPKAMGRMAGQKDSTKPRDEVFHPHAAKDSLLATTLRWPVLSQQLSPPQTVPYVAWSGNIKDPSPYMKGCSLPMWSPCLDTKDVDSSVSSGRMSGSSGGHESCTLSHGPWKERPPLILGPQRQPRKSDPRLEQLRDKIRAQAQWQASCASLGTSAPSSASCLYKTSTMLWRKTPKVTNALPVPAFPGSGVLRTAEHRGKDRASLSLRRELSKVPQHHTSVPRTNFKKVKNASCKREISKSSILRRTAKGRGSDRKAAAVKASPAHTWLCKPMSAHSDQQVSKHTPSLAFQDQSATIHGAMETLQDLRQQIQAGLELTRSPRVDRKLSLSKPKPQNLVGKRDRGLQSTQDMQGSSKTAWTVTEGKNSSLHRAGNLHSQQHRKKALAEHESCPRRTWTGQGQDSSFPRPGSTPEKPRFFSQRPWSALARQTYPQRTWDAQGQDISVQKSGSSLKKPSPFSQRPWSALAGRAYSACEDREVFEPSPWNSLSRPHSALQDPWSNSFVQRSSPSSKGKSAVPPPSKVKPAWPEPSQDLLQSKPAKEQDTPCPRPRGSLGQQHSSESLRDFMRQKAQARRQQALEQKALAAHTLELRNQRLQEVYRKQREAVLGKDIPVVSQRRPGIVTFVPMQSGGMEAPGSLGSPREQTWSKVTSGMVLGDQEAPDSFCLCLNKPWNRIETQDTGRPLEGYKQARLQALETMAEALRQRVDILTTKLDKPTSPDTSGDLASDVLPLCPSTAPATPTLVPPSYLRTLMSKGGRESPRDLVDSQAEPLLLSTCFQDGEMLPWSPSWELPNPNLGTHIESQPQGPVSSTPASVSQVIPHTQSCPAGSSSHGALSKEAIQGLEKKLQREMATLQALGACMKSSLGMPDAPDPTRGSLWQEEMPEVKKEGLVTPWTTRSCGKGEPADRPWAGWSGGQGGLPWASSTA.

Positions 116-132 are enriched in low complexity; sequence SSVSSGRMSGSSGGHES. Disordered stretches follow at residues 116–160, 345–447, 470–492, and 510–602; these read SSVS…SDPR, ELTR…PRFF, QDIS…QRPW, and EPSP…KAQA. 2 stretches are compositionally biased toward polar residues: residues 374 to 398 and 470 to 491; these read LQST…NSSL and QDIS…SQRP. Over residues 536 to 545 the composition is skewed to low complexity; that stretch reads SSPSSKGKSA. The stretch at 718 to 743 forms a coiled coil; the sequence is KQARLQALETMAEALRQRVDILTTKL. The segment at 916 to 958 is disordered; that stretch reads EVKKEGLVTPWTTRSCGKGEPADRPWAGWSGGQGGLPWASSTA.

The protein is Coiled-coil domain-containing protein 187 of Mus musculus (Mouse).